The primary structure comprises 259 residues: HTH-type transcriptional regulator Rv1931c (259 aa).

Over residues 104-121 (SHRRHRPRAGTGRRRPRH) the composition is skewed to basic residues. The disordered stretch occupies residues 104-170 (SHRRHRPRAG…GAGGHRGRAG (67 aa)). The region spanning 174-257 (RIGELAQRAA…GISPDQYRKA (84 aa)) is the HTH araC/xylS-type domain. 2 DNA-binding regions (H-T-H motif) span residues 176–197 (GELAQRAAMSPRHFTRVFSDEV) and 224–247 (VVAIAARCGFGTAETMRRSFIRRV).

Its function is as follows. Controls the expression of genes important for virulence. This is HTH-type transcriptional regulator Rv1931c from Mycobacterium tuberculosis (strain ATCC 25618 / H37Rv).